Consider the following 229-residue polypeptide: Protein TraJ (229 aa).

It localises to the cytoplasm. Functionally, this protein is essential for positively regulating the expression of transfer genes that are involved in the conjugal transfer of DNA between bacterial cells. This Escherichia coli (strain K12) protein is Protein TraJ (traJ).